The following is an 830-amino-acid chain: MGIEKFETFILISTISILLCICHGFTPVDNYLINCGSPTNGTLMGRIFLSDKLSSKLLTSSKEILASVGGNSGSDIYHTARVFTEVSSYKFSVTRGRHWVRLYFNPFDYQNFKMGSAKFAVSSQSHVLLSDFTVTSSKVVKEYSLNVTTNDLVLTFTPSSGSFAFVNAIEVISIPDTLITGSPRFVGNPAQFPDMSMQGLETIHRVNMGGPLVASNNDTLTRTWVPDSEFLLEKNLAKSMSKFSTVNFVPGYATEDSAPRTVYGSCTEMNSADNPNSIFNVTWEFDVDPGFQYYFRFHFCDIVSLSLNQLYFNLYVDSMVAATDIDLSTLVDNTLAGAYSMDFVTQTPKGSNKVRVSIGPSTVHTDYPNAIVNGLEIMKMNNSKGQLSTGTFVPGSSSSSKSNLGLIVGSAIGSLLAVVFLGSCFVLYKKRKRGQDGHSKTWMPFSINGTSMGSKYSNGTTLTSITTNANYRIPFAAVKDATNNFDESRNIGVGGFGKVYKGELNDGTKVAVKRGNPKSQQGLAEFRTEIEMLSQFRHRHLVSLIGYCDENNEMILIYEYMENGTVKSHLYGSGLPSLTWKQRLEICIGAARGLHYLHTGDSKPVIHRDVKSANILLDENFMAKVADFGLSKTGPELDQTHVSTAVKGSFGYLDPEYFRRQQLTDKSDVYSFGVVLFEVLCARPVIDPTLPREMVNLAEWAMKWQKKGQLDQIIDQSLRGNIRPDSLRKFAETGEKCLADYGVDRPSMGDVLWNLEYALQLQEAVIDGEPEDNSTNMIGELPPQINNFSQGDTSVNVPGTAGRFEESSIDDLSGVSMSKVFSQLVKSEGR.

The N-terminal stretch at 1–24 (MGIEKFETFILISTISILLCICHG) is a signal peptide. Residues 25–405 (FTPVDNYLIN…SSSSSKSNLG (381 aa)) are Extracellular-facing. Residues N40, N146, N217, N280, and N381 are each glycosylated (N-linked (GlcNAc...) asparagine). The chain crosses the membrane as a helical span at residues 406 to 426 (LIVGSAIGSLLAVVFLGSCFV). The Cytoplasmic portion of the chain corresponds to 427-830 (LYKKRKRGQD…FSQLVKSEGR (404 aa)). In terms of domain architecture, Protein kinase spans 485–758 (FDESRNIGVG…GDVLWNLEYA (274 aa)). ATP is bound by residues 491–499 (IGVGGFGKV) and K513. D609 (proton acceptor) is an active-site residue.

The protein belongs to the protein kinase superfamily. Ser/Thr protein kinase family. Post-translationally, autophosphorylated. Expressed in most vegetative tissues, including leaves, stems and roots, especially in cell elongation regions.

The protein resides in the cell membrane. Functionally, receptor-like protein kinase required for cell elongation during vegetative growth, mostly in a brassinosteroid-(BR-) independent manner. The polypeptide is Receptor-like protein kinase HERK 1 (HERK1) (Arabidopsis thaliana (Mouse-ear cress)).